The sequence spans 257 residues: Probable amino-acid ABC transporter ATP-binding protein HI_1078 (257 aa).

Residues 4–244 (LKVSNIQKNF…PQHERTKQFL (241 aa)) form the ABC transporter domain. 36–43 (GPSGSGKT) serves as a coordination point for ATP.

Belongs to the ABC transporter superfamily.

It is found in the cell inner membrane. Functionally, probably part of a binding-protein-dependent transport system for an amino acid. Probably responsible for energy coupling to the transport system. The protein is Probable amino-acid ABC transporter ATP-binding protein HI_1078 of Haemophilus influenzae (strain ATCC 51907 / DSM 11121 / KW20 / Rd).